Here is an 88-residue protein sequence, read N- to C-terminus: Putative sulfur carrier protein AF_0554 (88 aa).

Cys-26 serves as the catalytic Cysteine persulfide intermediate.

This sequence belongs to the sulfur carrier protein TusA family.

The chain is Putative sulfur carrier protein AF_0554 from Archaeoglobus fulgidus (strain ATCC 49558 / DSM 4304 / JCM 9628 / NBRC 100126 / VC-16).